The following is a 244-amino-acid chain: MSDSAEMQQPELLLKSMNKLNGYHPQLIIPKKTLFKCDLDDKQSRLQVSSMHMENSGFLTEDEKRTIEAQKMKKRRTAGLRVAFIDPESQQYVLELHKWTKSYAFVKGWNKVVDKNDKTFKVGDVFSLWVFRCGGVNPVHDGVNLSGGHADSVVDGLEQGSLCFVLVPAKVSVHDGNLPQDSGHDGHNDNLPQDSVEPSSFFDESYELNHLFFDQEDSQGYLPDEDEDFGFNDDGSIRDSGHYQ.

The segment at residues 49–147 is a DNA-binding region (TF-B3); sequence SSMHMENSGF…PVHDGVNLSG (99 aa). Disordered regions lie at residues 175–196 and 217–244; these read DGNL…QDSV and DSQG…GHYQ. Positions 235-244 are enriched in basic and acidic residues; the sequence is GSIRDSGHYQ.

It localises to the nucleus. This Arabidopsis thaliana (Mouse-ear cress) protein is Putative B3 domain-containing protein At2g31460.